An 814-amino-acid polypeptide reads, in one-letter code: DNA ligase (814 aa).

Residues 46–50, 95–96, and glutamate 129 each bind NAD(+); these read DAEYD and SL. The active-site N6-AMP-lysine intermediate is lysine 131. The NAD(+) site is built by arginine 152, glutamate 189, lysine 305, and lysine 329. Cysteine 434, cysteine 437, cysteine 458, and cysteine 464 together coordinate Zn(2+). The tract at residues 525-548 is disordered; sequence LSAQRRSEGEPAPKKPTKKKGEEE. The BRCT domain occupies 735 to 814; it reads TSAAAFAGKT…DDWLAMLAEA (80 aa).

It belongs to the NAD-dependent DNA ligase family. LigA subfamily. The cofactor is Mg(2+). Mn(2+) is required as a cofactor.

It carries out the reaction NAD(+) + (deoxyribonucleotide)n-3'-hydroxyl + 5'-phospho-(deoxyribonucleotide)m = (deoxyribonucleotide)n+m + AMP + beta-nicotinamide D-nucleotide.. DNA ligase that catalyzes the formation of phosphodiester linkages between 5'-phosphoryl and 3'-hydroxyl groups in double-stranded DNA using NAD as a coenzyme and as the energy source for the reaction. It is essential for DNA replication and repair of damaged DNA. This is DNA ligase from Methylorubrum extorquens (strain PA1) (Methylobacterium extorquens).